The chain runs to 338 residues: Phosphate acyltransferase (338 aa).

The protein belongs to the PlsX family. As to quaternary structure, homodimer. Probably interacts with PlsY.

The protein localises to the cytoplasm. It carries out the reaction a fatty acyl-[ACP] + phosphate = an acyl phosphate + holo-[ACP]. Its pathway is lipid metabolism; phospholipid metabolism. Catalyzes the reversible formation of acyl-phosphate (acyl-PO(4)) from acyl-[acyl-carrier-protein] (acyl-ACP). This enzyme utilizes acyl-ACP as fatty acyl donor, but not acyl-CoA. The protein is Phosphate acyltransferase of Endomicrobium trichonymphae.